Consider the following 107-residue polypeptide: Flagellar hook-basal body complex protein FliE (107 aa).

The protein belongs to the FliE family.

It is found in the bacterial flagellum basal body. This Mesorhizobium japonicum (strain LMG 29417 / CECT 9101 / MAFF 303099) (Mesorhizobium loti (strain MAFF 303099)) protein is Flagellar hook-basal body complex protein FliE.